The following is a 425-amino-acid chain: Aspyridones cluster regulator (425 aa).

A DNA-binding region (zn(2)-C6 fungal-type) is located at residues 100–127; sequence CVDCRASKTRCTGEPEGCKRCTFRKRPC. The tract at residues 132–159 is disordered; sequence LRRSNTTQHGEQIEASSSTFTMSDEQGS. Positions 133–157 are enriched in polar residues; sequence RRSNTTQHGEQIEASSSTFTMSDEQ.

Its subcellular location is the nucleus. In terms of biological role, transcription factor involved in regulation of gene cluster that mediates the biosynthesis of aphidicolin. The chain is Aspyridones cluster regulator (TF) from Neocamarosporium betae (Beet black rot fungus).